A 149-amino-acid polypeptide reads, in one-letter code: Large ribosomal subunit protein bL9 (149 aa).

It belongs to the bacterial ribosomal protein bL9 family.

Functionally, binds to the 23S rRNA. The chain is Large ribosomal subunit protein bL9 from Edwardsiella ictaluri (strain 93-146).